Here is a 300-residue protein sequence, read N- to C-terminus: Cutinase est2 (300 aa).

The first 39 residues, 1–39, serve as a signal peptide directing secretion; that stretch reads MSVTTPRRETSLLSRALRATAAAATAVVATVALAAPAQA. Tyr-99 is a poly(ethylene terephthalate) binding site. Ser-169 acts as the Nucleophile in catalysis. Positions 170 and 194 each coordinate poly(ethylene terephthalate). Glu-213 contacts Ca(2+). The active-site Charge relay system is the Asp-215. Asp-243 is a Ca(2+) binding site. His-247 (charge relay system) is an active-site residue. A disulfide bridge connects residues Cys-280 and Cys-298. Glu-292 lines the Ca(2+) pocket.

It belongs to the AB hydrolase superfamily. Monomer. Requires Ca(2+) as cofactor.

Its subcellular location is the secreted. The protein localises to the periplasm. It carries out the reaction an acetyl ester + H2O = an aliphatic alcohol + acetate + H(+). The catalysed reaction is (ethylene terephthalate)(n) + H2O = (ethylene terephthalate)(n-1) + 4-[(2-hydroxyethoxy)carbonyl]benzoate + H(+). It catalyses the reaction a butanoate ester + H2O = an aliphatic alcohol + butanoate + H(+). The enzyme catalyses cutin + H2O = cutin monomers.. It carries out the reaction a hexanoate ester + H2O = an aliphatic alcohol + hexanoate + H(+). The catalysed reaction is an octanoate ester + H2O = an aliphatic alcohol + octanoate + H(+). Its activity is regulated as follows. Activated by calcium ions. Activated by magnesium ions. Activated by manganese ions. Inhibited by the serine hydrolase inhibitor phenylmethanesulfonyl fluoride (PMSF). Inhibited by the chelator ethylenediaminetetraacetic acid (EDTA). Inhibited by iron ions. Inhibited by aluminum ions. Inhibited by rubidium ions. Inhibited by lithium ions. Catalyzes the hydrolysis of cutin, a polyester that forms the structure of plant cuticle. Shows esterase activity towards p-nitrophenol-linked aliphatic esters (pNP-aliphatic esters). Capable of degrading the plastic poly(ethylene terephthalate) (PET), the most abundant polyester plastic in the world. Can also depolymerize the synthetic polyesters poly(epsilon-caprolactone) (PCL), poly(butylene succinate-co-adipate) (PBSA), poly(butylene succinate) (PBS), and poly(lactic acid) (PLA). The chain is Cutinase est2 from Thermobifida alba (Thermomonospora alba).